We begin with the raw amino-acid sequence, 247 residues long: Small ribosomal subunit protein uS3 (247 aa).

Positions V51–R119 constitute a KH type-2 domain. Residues P224–E233 are compositionally biased toward basic and acidic residues. The tract at residues P224–R247 is disordered.

This sequence belongs to the universal ribosomal protein uS3 family. As to quaternary structure, part of the 30S ribosomal subunit. Forms a tight complex with proteins S10 and S14.

In terms of biological role, binds the lower part of the 30S subunit head. Binds mRNA in the 70S ribosome, positioning it for translation. This is Small ribosomal subunit protein uS3 from Jannaschia sp. (strain CCS1).